Consider the following 1033-residue polypeptide: RNA cytidine acetyltransferase (1033 aa).

Residues 285 to 294 and R465 each bind ATP; that span reads GRGKSAALGL. One can recognise an N-acetyltransferase domain in the interval 560 to 694; it reads VDLKNPKLPD…IHVRDAKTMP (135 aa). Residues 626–628, 633–639, and R727 each bind acetyl-CoA; these read IAV and VKMGYGT. The tract at residues 988–1033 is disordered; sequence ENQIQKTNGKGARVVSIKGEKRKNNSLDASDKKTKEKPSSKKKFRK. Residues 1005–1026 are compositionally biased toward basic and acidic residues; the sequence is KGEKRKNNSLDASDKKTKEKPS.

It belongs to the RNA cytidine acetyltransferase family. NAT10 subfamily. As to quaternary structure, interacts with tan1.

It localises to the nucleus. Its subcellular location is the nucleolus. It catalyses the reaction a cytidine in 18S rRNA + acetyl-CoA + ATP + H2O = an N(4)-acetylcytidine in 18S rRNA + ADP + phosphate + CoA + H(+). The enzyme catalyses a cytidine in tRNA + acetyl-CoA + ATP + H2O = an N(4)-acetylcytidine in tRNA + ADP + phosphate + CoA + H(+). Its function is as follows. RNA cytidine acetyltransferase with specificity toward both 18S rRNA and tRNAs. Catalyzes the formation of N(4)-acetylcytidine (ac4C) at positions 1297 and 1815 in 18S rRNA. Required for early nucleolar cleavages of precursor rRNA at sites A0, A1 and A2 during 18S rRNA synthesis. Catalyzes the formation of ac4C in serine and leucine tRNAs. Requires the tRNA-binding adapter protein tan1 for full tRNA acetyltransferase activity but not for 18S rRNA acetylation. The protein is RNA cytidine acetyltransferase of Schizosaccharomyces pombe (strain 972 / ATCC 24843) (Fission yeast).